Here is a 373-residue protein sequence, read N- to C-terminus: Probable leucine aminopeptidase 1 (373 aa).

The signal sequence occupies residues 1–18 (MKLLSVLALSATATSVLG). Zn(2+)-binding residues include His-176 and Asp-195. The N-linked (GlcNAc...) asparagine glycan is linked to Asn-196. Residues Glu-234 and Asp-261 each coordinate Zn(2+). A glycan (N-linked (GlcNAc...) asparagine) is linked at Asn-288. The cysteines at positions 310 and 314 are disulfide-linked. His-343 contacts Zn(2+).

The protein belongs to the peptidase M28 family. M28E subfamily. Monomer. It depends on Zn(2+) as a cofactor.

The protein localises to the secreted. Its function is as follows. Extracellular aminopeptidase which contributes to pathogenicity. The polypeptide is Probable leucine aminopeptidase 1 (LAP1) (Trichophyton verrucosum (strain HKI 0517)).